Consider the following 817-residue polypeptide: Putative ATP-dependent RNA helicase R350 (817 aa).

The segment at 1–29 is disordered; the sequence is MNRRNRSNDLNPEPSIENPNNQIAEEFPG. Polar residues predominate over residues 17-29; sequence ENPNNQIAEEFPG. A Helicase ATP-binding domain is found at 93–271; sequence LNPQGPYTSI…ALMFNLLRPG (179 aa). 106 to 113 contributes to the ATP binding site; that stretch reads HGLGSGKT. The short motif at 206–209 is the DEAH box element; it reads DEAH. The Helicase C-terminal domain occupies 495–661; that stretch reads LAIAFMTYIS…STDEYVEDQA (167 aa).

It belongs to the DEAD box helicase family. DEAH subfamily.

The protein resides in the virion. The enzyme catalyses ATP + H2O = ADP + phosphate + H(+). In Acanthamoeba polyphaga mimivirus (APMV), this protein is Putative ATP-dependent RNA helicase R350.